The sequence spans 220 residues: Guanylate kinase (220 aa).

The region spanning 16–195 (GLMFVLSSPS…AFESVKAILR (180 aa)) is the Guanylate kinase-like domain. Position 23 to 30 (23 to 30 (SPSGAGKT)) interacts with ATP.

Belongs to the guanylate kinase family.

The protein resides in the cytoplasm. The enzyme catalyses GMP + ATP = GDP + ADP. Its function is as follows. Essential for recycling GMP and indirectly, cGMP. The chain is Guanylate kinase from Rhodopseudomonas palustris (strain HaA2).